A 692-amino-acid polypeptide reads, in one-letter code: UvrABC system protein B (692 aa).

The region spanning 32–418 (DNIENGEKAQ…QTDTIVEQII (387 aa)) is the Helicase ATP-binding domain. Residue 45–52 (GATGTGKT) coordinates ATP. The Beta-hairpin motif lies at 98–121 (YYDYYQPEAYVPSSDTYIEKDSSV). A Helicase C-terminal domain is found at 436 to 631 (QIDDLVGEIH…TIKKEIRDLI (196 aa)). Residues 656-691 (KALVKKLEKEMQQAASALDFEGAAQLRDMVLELRAM) enclose the UVR domain.

Belongs to the UvrB family. As to quaternary structure, forms a heterotetramer with UvrA during the search for lesions. Interacts with UvrC in an incision complex.

It is found in the cytoplasm. In terms of biological role, the UvrABC repair system catalyzes the recognition and processing of DNA lesions. A damage recognition complex composed of 2 UvrA and 2 UvrB subunits scans DNA for abnormalities. Upon binding of the UvrA(2)B(2) complex to a putative damaged site, the DNA wraps around one UvrB monomer. DNA wrap is dependent on ATP binding by UvrB and probably causes local melting of the DNA helix, facilitating insertion of UvrB beta-hairpin between the DNA strands. Then UvrB probes one DNA strand for the presence of a lesion. If a lesion is found the UvrA subunits dissociate and the UvrB-DNA preincision complex is formed. This complex is subsequently bound by UvrC and the second UvrB is released. If no lesion is found, the DNA wraps around the other UvrB subunit that will check the other stand for damage. The sequence is that of UvrABC system protein B from Lactococcus lactis subsp. lactis (strain IL1403) (Streptococcus lactis).